Consider the following 144-residue polypeptide: Cytochrome c oxidase subunit 4 isoform 1, mitochondrial (144 aa).

Residues 1–73 (SVVKSEDFSL…SFAEMNRGSN (73 aa)) lie on the Mitochondrial matrix side of the membrane. An N6-acetyllysine; alternate modification is found at lysine 4. Position 4 is an N6-succinyllysine; alternate (lysine 4). N6-acetyllysine is present on lysine 28. Phosphoserine occurs at positions 31 and 33. N6-acetyllysine; alternate is present on lysine 35. Residue lysine 35 is modified to N6-succinyllysine; alternate. At lysine 42 the chain carries N6-acetyllysine. A helical membrane pass occupies residues 74 to 99 (EWKTVVGGAMFFIGFTALVIMWQKHY). Over 100–144 (VYGPLPQSFDKEWVAKQTKRMLDMKVNPIQGLASKWDYEKNEWKK) the chain is Mitochondrial intermembrane.

The protein belongs to the cytochrome c oxidase IV family. In terms of assembly, component of the cytochrome c oxidase (complex IV, CIV), a multisubunit enzyme composed of 14 subunits. The complex is composed of a catalytic core of 3 subunits MT-CO1, MT-CO2 and MT-CO3, encoded in the mitochondrial DNA, and 11 supernumerary subunits COX4I, COX5A, COX5B, COX6A, COX6B, COX6C, COX7A, COX7B, COX7C, COX8 and NDUFA4, which are encoded in the nuclear genome. The complex exists as a monomer or a dimer and forms supercomplexes (SCs) in the inner mitochondrial membrane with NADH-ubiquinone oxidoreductase (complex I, CI) and ubiquinol-cytochrome c oxidoreductase (cytochrome b-c1 complex, complex III, CIII), resulting in different assemblies (supercomplex SCI(1)III(2)IV(1) and megacomplex MCI(2)III(2)IV(2)). Interacts with PHB2; the interaction decreases in absence of SPHK2. Interacts with AFG1L. Interacts with ABCB7; this interaction allows the regulation of cellular iron homeostasis and cellular reactive oxygen species (ROS) levels in cardiomyocytes. Interacts with FLVCR2; this interaction occurs in the absence of heme and is disrupted upon heme binding. Interacts with IRGC.

It is found in the mitochondrion inner membrane. Its pathway is energy metabolism; oxidative phosphorylation. Functionally, component of the cytochrome c oxidase, the last enzyme in the mitochondrial electron transport chain which drives oxidative phosphorylation. The respiratory chain contains 3 multisubunit complexes succinate dehydrogenase (complex II, CII), ubiquinol-cytochrome c oxidoreductase (cytochrome b-c1 complex, complex III, CIII) and cytochrome c oxidase (complex IV, CIV), that cooperate to transfer electrons derived from NADH and succinate to molecular oxygen, creating an electrochemical gradient over the inner membrane that drives transmembrane transport and the ATP synthase. Cytochrome c oxidase is the component of the respiratory chain that catalyzes the reduction of oxygen to water. Electrons originating from reduced cytochrome c in the intermembrane space (IMS) are transferred via the dinuclear copper A center (CU(A)) of subunit 2 and heme A of subunit 1 to the active site in subunit 1, a binuclear center (BNC) formed by heme A3 and copper B (CU(B)). The BNC reduces molecular oxygen to 2 water molecules using 4 electrons from cytochrome c in the IMS and 4 protons from the mitochondrial matrix. This chain is Cytochrome c oxidase subunit 4 isoform 1, mitochondrial (COX4I1), found in Pan troglodytes (Chimpanzee).